The sequence spans 129 residues: UPF0146 protein VNG_2609C (129 aa).

The protein belongs to the UPF0146 family.

In Halobacterium salinarum (strain ATCC 700922 / JCM 11081 / NRC-1) (Halobacterium halobium), this protein is UPF0146 protein VNG_2609C.